A 605-amino-acid polypeptide reads, in one-letter code: Elongation factor 4 (605 aa).

The region spanning Gly-9 to Ala-192 is the tr-type G domain. Residues Asp-21 to Thr-26 and Asn-139 to Asp-142 contribute to the GTP site.

This sequence belongs to the TRAFAC class translation factor GTPase superfamily. Classic translation factor GTPase family. LepA subfamily.

Its subcellular location is the cell inner membrane. The enzyme catalyses GTP + H2O = GDP + phosphate + H(+). In terms of biological role, required for accurate and efficient protein synthesis under certain stress conditions. May act as a fidelity factor of the translation reaction, by catalyzing a one-codon backward translocation of tRNAs on improperly translocated ribosomes. Back-translocation proceeds from a post-translocation (POST) complex to a pre-translocation (PRE) complex, thus giving elongation factor G a second chance to translocate the tRNAs correctly. Binds to ribosomes in a GTP-dependent manner. The chain is Elongation factor 4 from Chlorobaculum tepidum (strain ATCC 49652 / DSM 12025 / NBRC 103806 / TLS) (Chlorobium tepidum).